Reading from the N-terminus, the 465-residue chain is Argininosuccinate lyase (465 aa).

The protein belongs to the lyase 1 family. Argininosuccinate lyase subfamily.

Its subcellular location is the cytoplasm. The catalysed reaction is 2-(N(omega)-L-arginino)succinate = fumarate + L-arginine. Its pathway is amino-acid biosynthesis; L-arginine biosynthesis; L-arginine from L-ornithine and carbamoyl phosphate: step 3/3. The polypeptide is Argininosuccinate lyase (Rhodopseudomonas palustris (strain HaA2)).